A 402-amino-acid polypeptide reads, in one-letter code: Probable tRNA pseudouridine synthase D (402 aa).

Residue Asp94 is the Nucleophile of the active site. Positions 175 to 364 (YILNYYGTQR…PGTRRKLITK (190 aa)) constitute a TRUD domain.

It belongs to the pseudouridine synthase TruD family.

The enzyme catalyses uridine(13) in tRNA = pseudouridine(13) in tRNA. In terms of biological role, could be responsible for synthesis of pseudouridine from uracil-13 in transfer RNAs. The polypeptide is Probable tRNA pseudouridine synthase D (Methanococcus aeolicus (strain ATCC BAA-1280 / DSM 17508 / OCM 812 / Nankai-3)).